The primary structure comprises 443 residues: 3-ketoacyl-CoA thiolase 1, peroxisomal (443 aa).

The transit peptide at 1–30 (MEKATERQRILLRHLQPSSSSDASLSASAC) directs the protein to the peroxisome. The Acyl-thioester intermediate role is filled by Cys130. Residues His385 and Cys417 each act as proton acceptor in the active site.

It belongs to the thiolase-like superfamily. Thiolase family. Homodimer. Low levels in seedlings and leaves.

It localises to the peroxisome. It carries out the reaction an acyl-CoA + acetyl-CoA = a 3-oxoacyl-CoA + CoA. The protein operates within lipid metabolism; fatty acid metabolism. In terms of biological role, involved in fatty-acid beta-oxidation prior to gluconeogenesis during germination and subsequent seedling growth. Implicated in jasmonic acid (JA) biosynthesis. This is 3-ketoacyl-CoA thiolase 1, peroxisomal (KAT1) from Arabidopsis thaliana (Mouse-ear cress).